The chain runs to 249 residues: Type III pantothenate kinase (249 aa).

6–13 (DCGNSFIK) provides a ligand contact to ATP. Residues Y93 and 100–103 (GLDR) contribute to the substrate site. Catalysis depends on D102, which acts as the Proton acceptor. D122 is a K(+) binding site. T125 is a binding site for ATP. Position 181 (T181) interacts with substrate.

This sequence belongs to the type III pantothenate kinase family. As to quaternary structure, homodimer. NH4(+) is required as a cofactor. The cofactor is K(+).

The protein resides in the cytoplasm. The enzyme catalyses (R)-pantothenate + ATP = (R)-4'-phosphopantothenate + ADP + H(+). The protein operates within cofactor biosynthesis; coenzyme A biosynthesis; CoA from (R)-pantothenate: step 1/5. Its function is as follows. Catalyzes the phosphorylation of pantothenate (Pan), the first step in CoA biosynthesis. This chain is Type III pantothenate kinase, found in Pseudomonas fluorescens (strain SBW25).